A 249-amino-acid chain; its full sequence is MAIFITGTDTNVGKTIISTWICLHLGWGYFKPIQTGGNSDSDFVSSTTGVPAYDSVFSFPDPIAPHVAAKMSGSSIDILKIQLPEYRKSLSNKINSIPTTEHGRSKFISATTQTKYWEKENNKIVIEGAGGVLVPLQENGTKMVDLIQHLNVPVIIVSRSTLGAINHTLLTLEALQAREIKVLGIVINSMCEDFLDYNSKAIAEYGSTEILATFPYLKEVTRDSILSVQMGDSMKALLESTLKCKNSLL.

11–16 (NVGKTI) lines the ATP pocket. Threonine 15 contributes to the Mg(2+) binding site. Lysine 31 is a catalytic residue. Position 35 (threonine 35) interacts with substrate. ATP-binding positions include aspartate 40, 127–130 (EGAG), 188–189 (NS), and 215–217 (PYL). Aspartate 40 and glutamate 127 together coordinate Mg(2+).

The protein belongs to the dethiobiotin synthetase family. In terms of assembly, homodimer. The cofactor is Mg(2+).

It localises to the cytoplasm. It catalyses the reaction (7R,8S)-7,8-diammoniononanoate + CO2 + ATP = (4R,5S)-dethiobiotin + ADP + phosphate + 3 H(+). Its pathway is cofactor biosynthesis; biotin biosynthesis; biotin from 7,8-diaminononanoate: step 1/2. Catalyzes a mechanistically unusual reaction, the ATP-dependent insertion of CO2 between the N7 and N8 nitrogen atoms of 7,8-diaminopelargonic acid (DAPA, also called 7,8-diammoniononanoate) to form a ureido ring. This chain is ATP-dependent dethiobiotin synthetase BioD, found in Neorickettsia sennetsu (strain ATCC VR-367 / Miyayama) (Ehrlichia sennetsu).